The sequence spans 447 residues: NADH peroxidase (447 aa).

FAD is bound by residues 7-11 (GSSHG), E32, C42, 110-113 (SPGA), and R132. H10 (proton acceptor) is an active-site residue. Residue C42 is the Redox-active of the active site. Residue C42 is modified to Cysteine sulfenic acid (-SOH). I160, D179, Y188, and G243 together coordinate NAD(+). Position 281 (D281) interacts with FAD. A297 is an NAD(+) binding site. Residue A299 participates in FAD binding. An NAD(+)-binding site is contributed by G328.

Belongs to the class-III pyridine nucleotide-disulfide oxidoreductase family. Homotetramer. FAD is required as a cofactor.

The catalysed reaction is H2O2 + NADH + H(+) = NAD(+) + 2 H2O. Functionally, peroxidase whose active site is a redox-active cysteine-sulfenic acid. This chain is NADH peroxidase (npr), found in Enterococcus faecalis (strain ATCC 700802 / V583).